Reading from the N-terminus, the 354-residue chain is Cellular communication network factor 6 (354 aa).

Residues 1 to 23 (MQGLLFSTLLLAGLAQFCCRVQG) form the signal peptide. In terms of domain architecture, IGFBP N-terminal spans 44 to 117 (RKQFCHWPCK…RYETGVCAYL (74 aa)). 6 disulfide bridges follow: Cys-48/Cys-72, Cys-52/Cys-74, Cys-54/Cys-75, Cys-61/Cys-78, Cys-86/Cys-100, and Cys-92/Cys-114. Asn-178 carries an N-linked (GlcNAc...) asparagine glycan. The TSP type-1 domain occupies 208–253 (KCLVQATKWTPCSRTCGMGISNRVTNENSNCEMRKEKRLCYIQPCD). Cystine bridges form between Cys-268–Cys-305, Cys-285–Cys-319, Cys-296–Cys-335, Cys-299–Cys-337, and Cys-304–Cys-341. In terms of domain architecture, CTCK spans 268 to 342 (CQPTFQLSKA…TSCVCQRNCR (75 aa)). Asn-308 carries an N-linked (GlcNAc...) asparagine glycan.

This sequence belongs to the CCN family. In terms of tissue distribution, predominant expression in adult kidney and testis and fetal kidney. Weaker expression found in placenta, ovary, prostate and small intestine. Also expressed in skeletally-derived cells such as synoviocytes and articular cartilage chondrocytes.

The protein resides in the secreted. The protein localises to the mitochondrion. In terms of biological role, plays a role in mitochondrial electron transport and mitochondrial respiration. Through its regulation of the mitochondrial function may play a role in normal postnatal skeletal growth and cartilage homeostasis. The protein is Cellular communication network factor 6 of Homo sapiens (Human).